A 712-amino-acid chain; its full sequence is Phosphomethylpyrimidine synthase (712 aa).

The segment at 14-49 is disordered; sequence AIDITAPESTIPNKSKVPNKSAESSQSTVPKAPSRR. A compositionally biased stretch (polar residues) spans 20 to 42; the sequence is PESTIPNKSKVPNKSAESSQSTV. Substrate contacts are provided by residues Asn-283, Met-312, Tyr-341, His-377, 397–399, 438–441, and Glu-477; these read SRG and DGMR. Position 481 (His-481) interacts with Zn(2+). Tyr-504 is a substrate binding site. His-545 contacts Zn(2+). The [4Fe-4S] cluster site is built by Cys-625, Cys-628, and Cys-633.

Belongs to the ThiC family. As to quaternary structure, homodimer. Requires [4Fe-4S] cluster as cofactor.

The catalysed reaction is 5-amino-1-(5-phospho-beta-D-ribosyl)imidazole + S-adenosyl-L-methionine = 4-amino-2-methyl-5-(phosphooxymethyl)pyrimidine + CO + 5'-deoxyadenosine + formate + L-methionine + 3 H(+). It functions in the pathway cofactor biosynthesis; thiamine diphosphate biosynthesis. Catalyzes the synthesis of the hydroxymethylpyrimidine phosphate (HMP-P) moiety of thiamine from aminoimidazole ribotide (AIR) in a radical S-adenosyl-L-methionine (SAM)-dependent reaction. The protein is Phosphomethylpyrimidine synthase of Shewanella putrefaciens (strain CN-32 / ATCC BAA-453).